The primary structure comprises 234 residues: Small ribosomal subunit protein eS4 (234 aa).

The S4 RNA-binding; degenerate domain occupies 38-99 (IPLLIALRDY…GNDYLVSYDR (62 aa)).

Belongs to the eukaryotic ribosomal protein eS4 family.

The sequence is that of Small ribosomal subunit protein eS4 (rps4e) from Picrophilus torridus (strain ATCC 700027 / DSM 9790 / JCM 10055 / NBRC 100828 / KAW 2/3).